The primary structure comprises 294 residues: Cell division control protein 2 homolog 2 (294 aa).

Positions 4–287 (YEKVEKIGEG…ARGALEHEYF (284 aa)) constitute a Protein kinase domain. Residues 10 to 18 (IGEGTYGVV) and K33 contribute to the ATP site. T14 is modified (phosphothreonine). Y15 is modified (phosphotyrosine). The active-site Proton acceptor is D127. The residue at position 161 (T161) is a Phosphothreonine; by CAK.

It belongs to the protein kinase superfamily. CMGC Ser/Thr protein kinase family. CDC2/CDKX subfamily. As to expression, found in most organs including root, young leaf, stem, vegetative meristem and flower bud.

The catalysed reaction is L-seryl-[protein] + ATP = O-phospho-L-seryl-[protein] + ADP + H(+). The enzyme catalyses L-threonyl-[protein] + ATP = O-phospho-L-threonyl-[protein] + ADP + H(+). Its activity is regulated as follows. Phosphorylation at Thr-14 or Tyr-15 inactivates the enzyme, while phosphorylation at Thr-161 activates it. Plays a key role in the control of the eukaryotic cell cycle. Component of the kinase complex that phosphorylates the repetitive C-terminus of RNA polymerase II. The protein is Cell division control protein 2 homolog 2 (CDC2B) of Medicago sativa (Alfalfa).